The primary structure comprises 149 residues: Aspartate 1-decarboxylase (149 aa).

The active-site Schiff-base intermediate with substrate; via pyruvic acid is Ser25. Residue Ser25 is modified to Pyruvic acid (Ser). Thr57 provides a ligand contact to substrate. Residue Tyr58 is the Proton donor of the active site. Substrate is bound at residue Gly73–Ala75. Residues Gly119 to Ala149 are disordered.

This sequence belongs to the PanD family. In terms of assembly, heterooctamer of four alpha and four beta subunits. Requires pyruvate as cofactor. In terms of processing, is synthesized initially as an inactive proenzyme, which is activated by self-cleavage at a specific serine bond to produce a beta-subunit with a hydroxyl group at its C-terminus and an alpha-subunit with a pyruvoyl group at its N-terminus.

The protein resides in the cytoplasm. It carries out the reaction L-aspartate + H(+) = beta-alanine + CO2. Its pathway is cofactor biosynthesis; (R)-pantothenate biosynthesis; beta-alanine from L-aspartate: step 1/1. Catalyzes the pyruvoyl-dependent decarboxylation of aspartate to produce beta-alanine. In Parafrankia sp. (strain EAN1pec), this protein is Aspartate 1-decarboxylase.